The following is a 58-amino-acid chain: UPF0391 membrane protein Sden_3712 (58 aa).

A run of 2 helical transmembrane segments spans residues 6–26 (LTFLVIALVAGVLGFTGIAGA) and 27–47 (AAGIAKIIFFVFVVLLLISLV).

The protein belongs to the UPF0391 family.

Its subcellular location is the cell membrane. The chain is UPF0391 membrane protein Sden_3712 from Shewanella denitrificans (strain OS217 / ATCC BAA-1090 / DSM 15013).